The primary structure comprises 542 residues: Chaperonin GroEL 2 (542 aa).

Residues Thr-30 to Pro-33, Lys-51, Asp-87 to Thr-91, Gly-415, and Asp-496 each bind ATP. A disordered region spans residues Ala-523 to Phe-542. Positions Gln-533 to Phe-542 are enriched in pro residues.

It belongs to the chaperonin (HSP60) family. Forms a cylinder of 14 subunits composed of two heptameric rings stacked back-to-back. Interacts with the co-chaperonin GroES.

The protein localises to the cytoplasm. It carries out the reaction ATP + H2O + a folded polypeptide = ADP + phosphate + an unfolded polypeptide.. Functionally, together with its co-chaperonin GroES, plays an essential role in assisting protein folding. The GroEL-GroES system forms a nano-cage that allows encapsulation of the non-native substrate proteins and provides a physical environment optimized to promote and accelerate protein folding. The chain is Chaperonin GroEL 2 from Sinorhizobium medicae (strain WSM419) (Ensifer medicae).